The following is a 445-amino-acid chain: GTPase Der (445 aa).

EngA-type G domains lie at 3-167 (PVIA…YAGQ) and 180-353 (IKIA…AAAM). Residues 9-16 (GRPNVGKS), 56-60 (DTGGF), 119-122 (NKAE), 186-193 (GRPNVGKS), 233-237 (DTAGL), and 298-301 (NKWD) each bind GTP. The 85-residue stretch at 354–438 (AKLPTPKLTR…PLRIEFRSSN (85 aa)) folds into the KH-like domain.

The protein belongs to the TRAFAC class TrmE-Era-EngA-EngB-Septin-like GTPase superfamily. EngA (Der) GTPase family. As to quaternary structure, associates with the 50S ribosomal subunit.

Functionally, GTPase that plays an essential role in the late steps of ribosome biogenesis. This is GTPase Der from Burkholderia ambifaria (strain MC40-6).